A 189-amino-acid chain; its full sequence is Peptidyl-tRNA hydrolase (189 aa).

Tyr15 is a binding site for tRNA. Catalysis depends on His20, which acts as the Proton acceptor. 3 residues coordinate tRNA: Phe66, Asn68, and Asn114.

It belongs to the PTH family. In terms of assembly, monomer.

The protein resides in the cytoplasm. The enzyme catalyses an N-acyl-L-alpha-aminoacyl-tRNA + H2O = an N-acyl-L-amino acid + a tRNA + H(+). Functionally, hydrolyzes ribosome-free peptidyl-tRNAs (with 1 or more amino acids incorporated), which drop off the ribosome during protein synthesis, or as a result of ribosome stalling. Catalyzes the release of premature peptidyl moieties from peptidyl-tRNA molecules trapped in stalled 50S ribosomal subunits, and thus maintains levels of free tRNAs and 50S ribosomes. This is Peptidyl-tRNA hydrolase from Streptococcus suis (strain 98HAH33).